The chain runs to 201 residues: NAD(P)H dehydrogenase (quinone) (201 aa).

The Flavodoxin-like domain occupies 7 to 192; sequence ILVLYYSMYG…SIARYQGEYV (186 aa). FMN is bound by residues 13–18 and 81–83; these read SMYGHI and TRF. Tyr15 lines the NAD(+) pocket. Trp101 is a binding site for substrate. FMN-binding positions include 116 to 121 and His136; that span reads STGTGG.

It belongs to the WrbA family. Requires FMN as cofactor.

It carries out the reaction a quinone + NADH + H(+) = a quinol + NAD(+). The enzyme catalyses a quinone + NADPH + H(+) = a quinol + NADP(+). The sequence is that of NAD(P)H dehydrogenase (quinone) from Shigella sonnei (strain Ss046).